A 159-amino-acid chain; its full sequence is Ribonuclease H (159 aa).

An RNase H type-1 domain is found at 10-153 (TQTQVVIYTD…ADALANQGVE (144 aa)). 4 residues coordinate Mg(2+): Asp19, Glu57, Asp79, and Asp145.

Belongs to the RNase H family. Monomer. Requires Mg(2+) as cofactor.

It is found in the cytoplasm. It carries out the reaction Endonucleolytic cleavage to 5'-phosphomonoester.. Endonuclease that specifically degrades the RNA of RNA-DNA hybrids. The polypeptide is Ribonuclease H (Polaromonas sp. (strain JS666 / ATCC BAA-500)).